Reading from the N-terminus, the 176-residue chain is Large ribosomal subunit protein uL6 (176 aa).

This sequence belongs to the universal ribosomal protein uL6 family. Part of the 50S ribosomal subunit.

In terms of biological role, this protein binds to the 23S rRNA, and is important in its secondary structure. It is located near the subunit interface in the base of the L7/L12 stalk, and near the tRNA binding site of the peptidyltransferase center. This chain is Large ribosomal subunit protein uL6, found in Burkholderia multivorans (strain ATCC 17616 / 249).